Reading from the N-terminus, the 517-residue chain is Pentatricopeptide repeat-containing protein At1g13040, mitochondrial (517 aa).

Residues methionine 1–glutamate 57 constitute a mitochondrion transit peptide. 14 PPR repeats span residues valine 8 to valine 42, phenylalanine 43 to leucine 77, isoleucine 78 to proline 112, aspartate 113 to proline 147, aspartate 148 to proline 182, aspartate 183 to leucine 218, serine 219 to proline 253, aspartate 254 to leucine 288, aspartate 289 to arginine 320, aspartate 324 to methionine 358, asparagine 359 to proline 393, aspartate 394 to proline 428, aspartate 429 to proline 463, and aspartate 464 to leucine 498.

Belongs to the PPR family. P subfamily.

It localises to the mitochondrion. This is Pentatricopeptide repeat-containing protein At1g13040, mitochondrial from Arabidopsis thaliana (Mouse-ear cress).